The following is a 435-amino-acid chain: Protein SUPPRESSOR OF K(+) TRANSPORT GROWTH DEFECT 1 (435 aa).

Residues 7 to 72 (EQAIEYVKQA…LRRAEEIRAV (66 aa)) form the MIT domain. The segment at 73–113 (LDEGGSGPGSNGDAAVATRPKTKPKDGEGGGKDGEDPEQSK) is disordered. A compositionally biased stretch (basic and acidic residues) spans 95 to 113 (KPKDGEGGGKDGEDPEQSK). Position 172 to 179 (172 to 179 (GPPGTGKS)) interacts with ATP.

The protein belongs to the AAA ATPase family. In terms of assembly, monomer or homodimer (in nucleotide-free form). Decamer, dodecamer or tetradecamer of two stacked respective homooligomeric rings (when bound to ATP); the dodecameric form seems to be predominant. Interacts with members of the ESCRT-III subcomplex such as LIP5, VPS60-1, VPS2.1, VPS20.1, VPS20.2, VPS24-1, VPS32.1, VPS32.2, CHMP1A and VPS24. Binds to PROS/At4g24370. In terms of tissue distribution, mostly expressed in leaves, to a lower extent in seeds, and barely in roots and flowers (at protein level). Particularly expressed in trichomes.

It is found in the cytoplasm. The protein resides in the nucleus. The protein localises to the endosome. It localises to the multivesicular body membrane. Its subcellular location is the prevacuolar compartment membrane. It carries out the reaction ATP + H2O = ADP + phosphate + H(+). With respect to regulation, activated by LIP5 and PROS. Involved in the transport of biosynthetic membrane proteins from the prevacuolar/endosomal compartment to the vacuole. Required for multivesicular body (MVB) protein sorting. Catalyzes the ATP-dependent dissociation of class E VPS proteins from endosomal membranes, such as the disassembly of the ESCRT-III complex. May also regulate cell cycle. Required during seed development for the formation of mucilage in seed coat and testa. Involved in the maintenance of Na(+)/K(+) homeostasis under salt stress. Required for cell expansion. This Arabidopsis thaliana (Mouse-ear cress) protein is Protein SUPPRESSOR OF K(+) TRANSPORT GROWTH DEFECT 1.